The following is a 39-amino-acid chain: Photosystem II reaction center protein L (39 aa).

Residues 18-38 (SLYLGVLSVLVLGILFSSYFF) form a helical membrane-spanning segment.

This sequence belongs to the PsbL family. In terms of assembly, PSII is composed of 1 copy each of membrane proteins PsbA, PsbB, PsbC, PsbD, PsbE, PsbF, PsbH, PsbI, PsbJ, PsbK, PsbL, PsbM, PsbT, PsbX, PsbY, Psb30/Ycf12, peripheral proteins PsbO, CyanoQ (PsbQ), PsbU, PsbV and a large number of cofactors. It forms dimeric complexes.

The protein resides in the cellular thylakoid membrane. One of the components of the core complex of photosystem II (PSII). PSII is a light-driven water:plastoquinone oxidoreductase that uses light energy to abstract electrons from H(2)O, generating O(2) and a proton gradient subsequently used for ATP formation. It consists of a core antenna complex that captures photons, and an electron transfer chain that converts photonic excitation into a charge separation. This subunit is found at the monomer-monomer interface and is required for correct PSII assembly and/or dimerization. The chain is Photosystem II reaction center protein L from Prochlorococcus marinus (strain MIT 9515).